Reading from the N-terminus, the 541-residue chain is Phosphoenolpyruvate carboxykinase (ATP) (541 aa).

The substrate site is built by Arg-67, Tyr-207, and Lys-213. ATP is bound by residues Lys-213, His-232, and 248–256 (GLSGTGKTT). Mn(2+) is bound by residues Lys-213 and His-232. Asp-269 is a Mn(2+) binding site. Residues Glu-297, Arg-333, 449 to 450 (RI), and Thr-455 each bind ATP. Residue Arg-333 coordinates substrate.

Belongs to the phosphoenolpyruvate carboxykinase (ATP) family. As to quaternary structure, monomer. It depends on Mn(2+) as a cofactor.

The protein localises to the cytoplasm. The catalysed reaction is oxaloacetate + ATP = phosphoenolpyruvate + ADP + CO2. It participates in carbohydrate biosynthesis; gluconeogenesis. Involved in the gluconeogenesis. Catalyzes the conversion of oxaloacetate (OAA) to phosphoenolpyruvate (PEP) through direct phosphoryl transfer between the nucleoside triphosphate and OAA. This is Phosphoenolpyruvate carboxykinase (ATP) from Aliivibrio salmonicida (strain LFI1238) (Vibrio salmonicida (strain LFI1238)).